A 505-amino-acid polypeptide reads, in one-letter code: Lysine--tRNA ligase (505 aa).

The Mg(2+) site is built by Glu415 and Glu422.

This sequence belongs to the class-II aminoacyl-tRNA synthetase family. In terms of assembly, homodimer. Mg(2+) serves as cofactor.

It localises to the cytoplasm. The catalysed reaction is tRNA(Lys) + L-lysine + ATP = L-lysyl-tRNA(Lys) + AMP + diphosphate. The chain is Lysine--tRNA ligase from Pectobacterium carotovorum subsp. carotovorum (strain PC1).